Reading from the N-terminus, the 359-residue chain is Squamosa promoter-binding-like protein 13A (359 aa).

The disordered stretch occupies residues 75-94; the sequence is AKPEGSRSSSSKRTRGNGVG. The SBP-type zinc finger occupies 98–175; that stretch reads MPICLVDGCD…DGHNRRRRKP (78 aa). The Zn(2+) site is built by cysteine 101, cysteine 106, cysteine 123, histidine 126, cysteine 142, cysteine 145, histidine 149, and cysteine 161. The Bipartite nuclear localization signal motif lies at 158 to 174; it reads KRSCRKRLDGHNRRRRK.

Zn(2+) serves as cofactor.

The protein resides in the nucleus. Trans-acting factor that binds specifically to the consensus nucleotide sequence 5'-TNCGTACAA-3'. This chain is Squamosa promoter-binding-like protein 13A (SPL13A), found in Arabidopsis thaliana (Mouse-ear cress).